A 306-amino-acid polypeptide reads, in one-letter code: tRNA dimethylallyltransferase (306 aa).

Position 13–20 (13–20 (GPTGAGKT)) interacts with ATP. Residue 15-20 (TGAGKT) participates in substrate binding. Interaction with substrate tRNA stretches follow at residues 38–41 (DSRQ) and 161–165 (QRNAR).

This sequence belongs to the IPP transferase family. In terms of assembly, monomer. It depends on Mg(2+) as a cofactor.

The enzyme catalyses adenosine(37) in tRNA + dimethylallyl diphosphate = N(6)-dimethylallyladenosine(37) in tRNA + diphosphate. Its function is as follows. Catalyzes the transfer of a dimethylallyl group onto the adenine at position 37 in tRNAs that read codons beginning with uridine, leading to the formation of N6-(dimethylallyl)adenosine (i(6)A). In Maridesulfovibrio salexigens (strain ATCC 14822 / DSM 2638 / NCIMB 8403 / VKM B-1763) (Desulfovibrio salexigens), this protein is tRNA dimethylallyltransferase.